A 329-amino-acid polypeptide reads, in one-letter code: Cytosolic arginine sensor for mTORC1 subunit 2 (329 aa).

ACT domains follow at residues 72 to 140 (ADAT…HTLS) and 262 to 322 (ELWK…HALK).

This sequence belongs to the GATS family. In terms of assembly, forms homodimers and heterodimers with CASTOR1. Interacts with the GATOR2 complex which is composed of MIOS, SEC13, SEH1L, WDR24 and WDR59; the interaction is not regulated by arginine.

The protein localises to the cytoplasm. Its subcellular location is the cytosol. Functions as a negative regulator of the TORC1 signaling pathway through the GATOR complex. As part of homodimers or heterodimers with CASTOR1, directly binds and inhibits the GATOR subcomplex GATOR2 and thereby mTORC1. Does not directly bind arginine, but binding of arginine to CASTOR1 disrupts the interaction of CASTOR2-containing heterodimers with GATOR2 which can in turn activate mTORC1 and the TORC1 signaling pathway. This Mus musculus (Mouse) protein is Cytosolic arginine sensor for mTORC1 subunit 2.